The following is a 185-amino-acid chain: Protein DP71L (185 aa).

The segment covering 1-15 (MSRRNKKRSRRRRKK) has biased composition (basic residues). The disordered stretch occupies residues 1-38 (MSRRNKKRSRRRRKKPLNDIQPGPSKSSAQDEPIKSVS). Important for host CHOP inhibition regions lie at residues 126-128 (VHF) and 170-174 (LSTVF).

This sequence belongs to the asfivirus DP71L family. In terms of assembly, interacts (via C-terminus) with host PPP1CB.

In terms of biological role, interacts with the host phosphatase PP1 catalytic subunit (PPP1CB) and recruits it to dephosphorylate EIF2S1/eIF2alpha and therefore restores the host translation that has been shut-down by the host. Also inhibits the EIF2S1/eIF2alpha-ATF4-DDIT3/CHOP pathway. In African swine fever virus (isolate Pig/Kenya/KEN-50/1950) (ASFV), this protein is Protein DP71L.